A 224-amino-acid polypeptide reads, in one-letter code: Stage II sporulation protein R (224 aa).

The chain is Stage II sporulation protein R (spoIIR) from Bacillus subtilis (strain 168).